The following is a 227-amino-acid chain: Ferritin light chain (227 aa).

The signal sequence occupies residues Met-1–Ala-19. Residues Cys-25 and Cys-44 are joined by a disulfide bond. A Ferritin-like diiron domain is found at Phe-48–Met-208.

The protein belongs to the ferritin family. In terms of assembly, oligomer of 12 light (L) chains and 12 heavy (H) chains; L and H chains are disulfide-linked. The functional molecule forms a roughly spherical shell with a diameter of 12 nm and contains a central cavity into which the insoluble ferric iron core is deposited. As to expression, expressed in hemolymph, gut, ovaries and to a lesser extent in testes (at protein level). Expressed in the head (at protein level).

The protein localises to the golgi apparatus. It is found in the secreted. Functionally, stores iron in a soluble, non-toxic, readily available form. Important for iron homeostasis. Iron is taken up in the ferrous form and deposited as ferric hydroxides after oxidation. Ferritin is composed of a heavy (H) chain which is responsible for the oxidation and uptake of ferrous iron, and a light (L) chain which facilitates the nucleation of the ferrihydrite iron core. Required for dietary iron absorption in the midgut. Involved in tissue iron detoxification by exporting excess iron. Plays a role in the maintenance of circadian rhythms. Required for embryo and larval development. The sequence is that of Ferritin light chain from Drosophila melanogaster (Fruit fly).